A 552-amino-acid polypeptide reads, in one-letter code: Urocanate hydratase (552 aa).

Residues 49-50 (GG), Gln-127, 173-175 (GMG), Glu-193, Arg-198, 239-240 (NA), 260-264 (QTSAH), 270-271 (YV), and Tyr-319 contribute to the NAD(+) site. Cys-407 is a catalytic residue. Position 489 (Gly-489) interacts with NAD(+).

Belongs to the urocanase family. In terms of assembly, composed of at least two subunits. NAD(+) serves as cofactor.

It is found in the cytoplasm. The catalysed reaction is 4-imidazolone-5-propanoate = trans-urocanate + H2O. It functions in the pathway amino-acid degradation; L-histidine degradation into L-glutamate; N-formimidoyl-L-glutamate from L-histidine: step 2/3. In terms of biological role, catalyzes the conversion of urocanate to 4-imidazolone-5-propionate. The polypeptide is Urocanate hydratase (Bacillus subtilis (strain 168)).